We begin with the raw amino-acid sequence, 596 residues long: Trehalase (596 aa).

Positions 1 to 23 (MFKLPTISLLLVSWSCLVALSQA) are cleaved as a signal peptide. Residues Arg-193, 200-201 (WD), Asn-237, and 246-248 (RSQ) contribute to the substrate site. 2 N-linked (GlcNAc...) asparagine glycosylation sites follow: Asn-288 and Asn-293. The segment at 303–323 (SSGPRPESYREDVETGEEFPT) is disordered. Residues 307-309 (RPE) and Gly-341 contribute to the substrate site. The active-site Proton donor/acceptor is Asp-343. Asn-359, Asn-451, and Asn-516 each carry an N-linked (GlcNAc...) asparagine glycan. The Proton donor/acceptor role is filled by Glu-541. Glu-556 serves as a coordination point for substrate.

It belongs to the glycosyl hydrolase 37 family. In the adult brain predominantly expressed in glial cells (at protein level).

The enzyme catalyses alpha,alpha-trehalose + H2O = alpha-D-glucose + beta-D-glucose. Functionally, enzyme that cleaves trehalose to produce 2 glucose molecules that can be used by the glycolytic pathway. Glycolysis is essential in glial cells but not in neurons; neurons rely on the citric acid cycle for their energy needs, and on lactate and alanine secreted into the hemolymph by glial cells to fuel it. This chain is Trehalase, found in Drosophila melanogaster (Fruit fly).